Here is an 826-residue protein sequence, read N- to C-terminus: Eukaryotic translation initiation factor 3 subunit C (826 aa).

Disordered stretches follow at residues 1–71 (MSRF…GKGA) and 205–227 (SGGD…PRAK). Over residues 10–20 (DSDDSSSDEDL) the composition is skewed to acidic residues. Residues 21 to 30 (YGSGSESGSD) are compositionally biased toward low complexity. Residues 32 to 65 (SQDEQDGGDDNDDDMSDDSMFADDSDDDSDDDED) are compositionally biased toward acidic residues. The span at 218–227 (KEDKPKPRAK) shows a compositional bias: basic and acidic residues. One can recognise a PCI domain in the interval 605-779 (FHTHINLELL…NSVVFTQAVQ (175 aa)).

The protein belongs to the eIF-3 subunit C family. As to quaternary structure, component of the eukaryotic translation initiation factor 3 (eIF-3) complex.

The protein localises to the cytoplasm. Component of the eukaryotic translation initiation factor 3 (eIF-3) complex, which is involved in protein synthesis of a specialized repertoire of mRNAs and, together with other initiation factors, stimulates binding of mRNA and methionyl-tRNAi to the 40S ribosome. The eIF-3 complex specifically targets and initiates translation of a subset of mRNAs involved in cell proliferation. The chain is Eukaryotic translation initiation factor 3 subunit C from Yarrowia lipolytica (strain CLIB 122 / E 150) (Yeast).